A 256-amino-acid polypeptide reads, in one-letter code: Nuclear shuttle protein (256 aa).

A Bipartite nuclear localization signal motif is present at residues 18–39; the sequence is NTTNRFPIRRKYVGGHTRPSVR. A Nuclear localization signal motif is present at residues 81–96; it reads SRGPSGDGRSRDYIKL. An interaction with Arabidopsis thaliana NSI protein region spans residues 150–187; it reads ELFGAYSACYVNLRLLNNQQHRYRVLHSVKRFVSSAGD.

This sequence belongs to the begomovirus nuclear shuttle protein family. In terms of assembly, binds to single-stranded and double-stranded viral DNA. Interacts with the host nuclear shuttle interacting (NSI) protein. This interaction may allow NSP to recruit NSI monomers to the viral genome and thus regulate nuclear export of viral genome by NSP.

The protein localises to the host nucleus. Its subcellular location is the host cytoplasm. It is found in the host cell membrane. In terms of biological role, binds to the genomic viral ssDNA, shuttles it into and out of the cell nucleus. Begomoviruses use 2 proteins to transport their DNA from cell to cell. The nuclear shuttle protein (NSP) shuttles it between nucleus and cytoplasm and the movement protein (MP) probably transports the DNA-NSP complex to the cell periphery and facilitates movement across the cell wall. The sequence is that of Nuclear shuttle protein from Hewittia sublobata (Coralbush).